A 311-amino-acid polypeptide reads, in one-letter code: D-alanine--D-alanine ligase (311 aa).

Positions 106 to 301 constitute an ATP-grasp domain; it reads KLLWRGAELP…FDELCWRILL (196 aa). Residue 132-187 coordinates ATP; sequence IGSVGLPLMIKPAHEGSSIGMAKVERPEELEAARAEAARYDDLVLAERWIEGGEYT. The Mg(2+) site is built by Asp-255, Glu-268, and Asn-270.

The protein belongs to the D-alanine--D-alanine ligase family. Requires Mg(2+) as cofactor. The cofactor is Mn(2+).

The protein resides in the cytoplasm. It catalyses the reaction 2 D-alanine + ATP = D-alanyl-D-alanine + ADP + phosphate + H(+). It participates in cell wall biogenesis; peptidoglycan biosynthesis. Its function is as follows. Cell wall formation. The protein is D-alanine--D-alanine ligase of Alkalilimnicola ehrlichii (strain ATCC BAA-1101 / DSM 17681 / MLHE-1).